The sequence spans 598 residues: (+)-bornyl diphosphate synthase, chloroplastic (598 aa).

A chloroplast-targeting transit peptide spans 1–54; the sequence is MSIISMNVSILSKPLNCLHNLERRPSKALLVPCTAPTARLRASCSSKLQEAHQI. Arginine 314 lines the substrate pocket. Mg(2+) contacts are provided by aspartate 351 and aspartate 355. The short motif at 351–355 is the DDXXD motif element; the sequence is DDIYD. Arginine 493 is a substrate binding site. 3 residues coordinate Mg(2+): aspartate 496, threonine 500, and glutamate 504. Threonine 500 contacts substrate. Position 512 (lysine 512) interacts with substrate.

It belongs to the terpene synthase family. As to quaternary structure, homodimer. Mg(2+) is required as a cofactor.

The protein localises to the plastid. The protein resides in the chloroplast. It carries out the reaction (2E)-geranyl diphosphate = (2S,4R)-bornyl diphosphate. The enzyme catalyses (2E)-geranyl diphosphate = (1R,4S)-camphene + diphosphate. The catalysed reaction is (2E)-geranyl diphosphate = (1R,5R)-alpha-pinene + diphosphate. The protein operates within terpene metabolism; (R)-camphor biosynthesis. Catalyzes the formation of the (+)-camphor precursor (+)-bornyl diphosphate from geranyl diphosphate. The enzyme also produces significant amounts of (+)-alpha-pinene, (+)-camphene, and (+-)-limonene. The polypeptide is (+)-bornyl diphosphate synthase, chloroplastic (Salvia officinalis (Sage)).